Reading from the N-terminus, the 207-residue chain is 3-isopropylmalate dehydratase small subunit (207 aa).

It belongs to the LeuD family. LeuD type 1 subfamily. As to quaternary structure, heterodimer of LeuC and LeuD.

The enzyme catalyses (2R,3S)-3-isopropylmalate = (2S)-2-isopropylmalate. It functions in the pathway amino-acid biosynthesis; L-leucine biosynthesis; L-leucine from 3-methyl-2-oxobutanoate: step 2/4. In terms of biological role, catalyzes the isomerization between 2-isopropylmalate and 3-isopropylmalate, via the formation of 2-isopropylmaleate. This chain is 3-isopropylmalate dehydratase small subunit, found in Rhodospirillum rubrum (strain ATCC 11170 / ATH 1.1.1 / DSM 467 / LMG 4362 / NCIMB 8255 / S1).